The chain runs to 520 residues: DnaJ homolog l(2)tid, mitochondrial (520 aa).

A mitochondrion-targeting transit peptide spans 1–62 (MMISCKKLFV…RRLHTTRDLL (62 aa)). An Omega-N-methylarginine modification is found at R30. In terms of domain architecture, J spans 65–130 (DYYATLGVAK…QKRREYDTYG (66 aa)). An N6-acetyllysine modification is found at K106. The CR-type zinc finger occupies 214–292 (GVNKDVNVNV…CEGKGRTVQR (79 aa)). Zn(2+) contacts are provided by C227, C230, C244, C247, C266, C269, C280, and C283. A CXXCXGXG motif; approximate repeat occupies 227-234 (CPKCAGTK). One copy of the CXXCXGXG motif repeat lies at 244–251 (CQYCNGTG). Residues 266–273 (CRYCQGTR) form a CXXCXGXG motif; approximate repeat. A CXXCXGXG motif repeat occupies 280–287 (CSECEGKG). Positions 430-520 (QIHGIANRKD…FISKIKSMFN (91 aa)) are disordered. Over residues 446 to 476 (AGASEEPGAGAAAKASAAAAGSGASKPGPGA) the composition is skewed to low complexity. Positions 479–495 (SEGKDQWTDNKKTKAKE) are enriched in basic and acidic residues. The span at 496 to 511 (GGGSGSGQGDGGGGGF) shows a compositional bias: gly residues.

As to quaternary structure, interacts with ptc (via C-terminal cytoplasmic region); the interaction is probably direct. Interacts with hh/hedgehog; the interaction is probably mediated by the hedgehog receptor ptc. In terms of processing, appears to produce proteins of differing size. Predicted to have a molecular mass of 56 kDa (TID56) however proteins of 50 kDa, 47 kDa and 40 kDa have been identified and named TID50, TID47 and TID40. TID50 and TID40 localize to the mitochondria while TID47 localizes to the cytoplasm. TID50 is probably TID56 that has undergone mitochondrial transit peptide processing. TID40 and TID47 may be alternately processed proteins or may be isoforms resulting from alternative splicing. Ubiquitously expressed throughout embryonic development. In larvae, expression is seen in sensory organs, gopplet cells, gonads, imaginal disks, proventriculus, fat body, hematopoietic organ, midgut, Malpighian tubules and ring gland.

Its subcellular location is the cytoplasm. It is found in the cytosol. It localises to the mitochondrion. The protein resides in the mitochondrion outer membrane. Functionally, involved in hh/hedgehog signaling. May act as a tumor suppressor in larval imaginal disks. The polypeptide is DnaJ homolog l(2)tid, mitochondrial (Drosophila melanogaster (Fruit fly)).